The chain runs to 348 residues: Mycothiol acetyltransferase (348 aa).

N-acetyltransferase domains lie at 12 to 156 (TSMR…VDVT) and 169 to 330 (VAVR…HGTP). Glu44 serves as a coordination point for 1D-myo-inositol 2-(L-cysteinylamino)-2-deoxy-alpha-D-glucopyranoside. 91-93 (LVV) contacts acetyl-CoA. 3 residues coordinate 1D-myo-inositol 2-(L-cysteinylamino)-2-deoxy-alpha-D-glucopyranoside: Glu196, Lys235, and Glu253. Acetyl-CoA-binding positions include 257 to 259 (VGV) and 264 to 270 (QGLGMGR). Tyr291 is a binding site for 1D-myo-inositol 2-(L-cysteinylamino)-2-deoxy-alpha-D-glucopyranoside. 296 to 301 (NTVAVH) lines the acetyl-CoA pocket. A disordered region spans residues 320 to 348 (PPAGSPAHGTPLVRVTDTPSSPGDATMGS). Residues 336-348 (DTPSSPGDATMGS) show a composition bias toward polar residues.

The protein belongs to the acetyltransferase family. MshD subfamily. As to quaternary structure, monomer.

The enzyme catalyses 1D-myo-inositol 2-(L-cysteinylamino)-2-deoxy-alpha-D-glucopyranoside + acetyl-CoA = mycothiol + CoA + H(+). In terms of biological role, catalyzes the transfer of acetyl from acetyl-CoA to desacetylmycothiol (Cys-GlcN-Ins) to form mycothiol. The chain is Mycothiol acetyltransferase from Cellulomonas flavigena (strain ATCC 482 / DSM 20109 / BCRC 11376 / JCM 18109 / NBRC 3775 / NCIMB 8073 / NRS 134).